Here is a 390-residue protein sequence, read N- to C-terminus: Curcumin synthase 3 (390 aa).

The active site involves Cys-164.

This sequence belongs to the thiolase-like superfamily. Chalcone/stilbene synthases family. In terms of assembly, homodimer.

The catalysed reaction is (E)-feruloylacetyl-CoA + (E)-feruloyl-CoA + H2O = curcumin + CO2 + 2 CoA. The enzyme catalyses (E)-feruloylacetyl-CoA + (E)-4-coumaroyl-CoA + H2O = demethoxycurcumin + CO2 + 2 CoA. It catalyses the reaction (4-coumaroyl)acetyl-CoA + 4-coumaroyl-CoA + H2O = bisdemethoxycurcumin + CO2 + 2 CoA. The protein operates within secondary metabolite biosynthesis; flavonoid biosynthesis. Its function is as follows. Catalyzes the synthesis of curcumin by condensing feruloyl-CoA with a diketide-CoA in the curcuminoid biosynthesis. Also acts as a demethoxycurcumin synthase by accepting 4-coumaroyl-CoA as a starter substrate instead of feruloyl-CoA. This chain is Curcumin synthase 3 (CURS3), found in Curcuma longa (Turmeric).